A 179-amino-acid chain; its full sequence is Large ribosomal subunit protein uL5 (179 aa).

Belongs to the universal ribosomal protein uL5 family. In terms of assembly, part of the 50S ribosomal subunit; part of the 5S rRNA/L5/L18/L25 subcomplex. Contacts the 5S rRNA and the P site tRNA. Forms a bridge to the 30S subunit in the 70S ribosome.

This is one of the proteins that bind and probably mediate the attachment of the 5S RNA into the large ribosomal subunit, where it forms part of the central protuberance. In the 70S ribosome it contacts protein S13 of the 30S subunit (bridge B1b), connecting the 2 subunits; this bridge is implicated in subunit movement. Contacts the P site tRNA; the 5S rRNA and some of its associated proteins might help stabilize positioning of ribosome-bound tRNAs. The chain is Large ribosomal subunit protein uL5 from Saccharophagus degradans (strain 2-40 / ATCC 43961 / DSM 17024).